We begin with the raw amino-acid sequence, 322 residues long: Germ cell-specific gene 1-like protein (322 aa).

The Cytoplasmic segment spans residues 1-8 (MKTSRRGR). The helical transmembrane segment at 9-29 (ALLAVALNLLALLFATTAFLT) threads the bilayer. At 30 to 122 (TYWCQGTQRV…FIDLAPASEK (93 aa)) the chain is on the extracellular side. The helical transmembrane segment at 123 to 143 (GVLWLSVVSEVLYILLLVVGF) threads the bilayer. Over 144 to 163 (SLMCLELVHSSSVIDGLKLN) the chain is Cytoplasmic. The helical transmembrane segment at 164–184 (AFAAVFTVLSGLLGMVAHMMY) threads the bilayer. At 185–207 (TQVFQVTVSLGPEDWRPHSWDYG) the chain is on the extracellular side. Residues 208–228 (WSFCLAWGSFTCCMAASVTTL) traverse the membrane as a helical segment. Over 229-322 (NSYTKTVIEF…RQCWVLGHWV (94 aa)) the chain is Cytoplasmic. Position 274 is a phosphoserine (serine 274).

It belongs to the GSG1 family. As to quaternary structure, component of the inner core of AMPAR complexes. AMPAR complexes consist of an inner core made of 4 pore-forming GluA/GRIA proteins (GRIA1, GRIA2, GRIA3 and GRIA4) and 4 major auxiliary subunits arranged in a twofold symmetry. One of the two pairs of distinct binding sites is occupied either by CNIH2, CNIH3 or CACNG2, CACNG3. The other harbors CACNG2, CACNG3, CACNG4, CACNG8 or GSG1L. This inner core of AMPAR complexes is complemented by outer core constituents binding directly to the GluA/GRIA proteins at sites distinct from the interaction sites of the inner core constituents. Outer core constituents include at least PRRT1, PRRT2, CKAMP44/SHISA9, FRRS1L and NRN1. The proteins of the inner and outer core serve as a platform for other, more peripherally associated AMPAR constituents. Alone or in combination, these auxiliary subunits control the gating and pharmacology of the AMPAR complexes and profoundly impact their biogenesis and protein processing. In terms of tissue distribution, expressed in the brain, including hippocampus (at protein level).

It is found in the cell membrane. The protein resides in the synapse. In terms of biological role, as a component of the inner core of AMPAR complexes, modifies AMPA receptor (AMPAR) gating. This chain is Germ cell-specific gene 1-like protein (Gsg1l), found in Mus musculus (Mouse).